The chain runs to 218 residues: uncharacterized protein (218 aa).

The interval 1 to 67 (MARITNMGKR…KKKRSEYRRL (67 aa)) is disordered. Positions 29–39 (NSSNTNEESSS) are enriched in low complexity. Polar residues predominate over residues 40-49 (QDNMKASFGS). Residues 58–67 (KKKRSEYRRL) show a composition bias toward basic residues. CCHC-type zinc fingers lie at residues 77–94 (KFCF…DCPE), 100–117 (SICF…ACSK), and 124–141 (AKCF…QCEQ). The segment at 152-168 (CCKFCSSVHHLAKDCDQ) adopts a CCHC-type 4; atypical zinc-finger fold.

This is an uncharacterized protein from Schizosaccharomyces pombe (strain 972 / ATCC 24843) (Fission yeast).